Here is a 780-residue protein sequence, read N- to C-terminus: Probable trehalase (780 aa).

Positions 1 to 48 (MVDFLPKVTEINPPSEGNDGEDNIKPLSSGSEQRPLKEEGQQGGRRHH) are disordered. Phosphoserine occurs at positions 52 and 53. At Thr88 the chain carries Phosphothreonine. Residue Ser112 is modified to Phosphoserine. Substrate-binding positions include Arg331, 338–339 (WD), Asn375, Arg384, 384–386 (RSQ), and Gly505. Residues Asp507 and Glu703 each act as proton donor/acceptor in the active site.

This sequence belongs to the glycosyl hydrolase 37 family.

The catalysed reaction is alpha,alpha-trehalose + H2O = alpha-D-glucose + beta-D-glucose. The sequence is that of Probable trehalase (NTH2) from Saccharomyces cerevisiae (strain ATCC 204508 / S288c) (Baker's yeast).